Reading from the N-terminus, the 699-residue chain is Elongation factor G (699 aa).

In terms of domain architecture, tr-type G spans 8–290 (NKYRNLGIMA…KVIELLPSPV (283 aa)). Residues 17-24 (AHIDAGKT), 88-92 (DTPGH), and 142-145 (NKMD) each bind GTP.

It belongs to the TRAFAC class translation factor GTPase superfamily. Classic translation factor GTPase family. EF-G/EF-2 subfamily.

The protein resides in the cytoplasm. Catalyzes the GTP-dependent ribosomal translocation step during translation elongation. During this step, the ribosome changes from the pre-translocational (PRE) to the post-translocational (POST) state as the newly formed A-site-bound peptidyl-tRNA and P-site-bound deacylated tRNA move to the P and E sites, respectively. Catalyzes the coordinated movement of the two tRNA molecules, the mRNA and conformational changes in the ribosome. The sequence is that of Elongation factor G from Dichelobacter nodosus (strain VCS1703A).